Reading from the N-terminus, the 447-residue chain is Probable ethanolamine kinase B (447 aa).

Residues 178–208 (STTISTSTSTSTSTSSTSPSTSPSLENSTLS) show a composition bias toward low complexity. The interval 178–217 (STTISTSTSTSTSTSSTSPSTSPSLENSTLSPRNMNTQTS) is disordered.

It belongs to the choline/ethanolamine kinase family.

The protein localises to the cytoplasm. The catalysed reaction is ethanolamine + ATP = phosphoethanolamine + ADP + H(+). It participates in phospholipid metabolism; phosphatidylethanolamine biosynthesis; phosphatidylethanolamine from ethanolamine: step 1/3. Its function is as follows. Highly specific for ethanolamine phosphorylation. May be a rate-controlling step in phosphatidylethanolamine biosynthesis. In Dictyostelium discoideum (Social amoeba), this protein is Probable ethanolamine kinase B (etnkB).